Reading from the N-terminus, the 200-residue chain is Pyridoxal phosphate homeostasis protein (200 aa).

At Lys-11 the chain carries N6-(pyridoxal phosphate)lysine.

This sequence belongs to the pyridoxal phosphate-binding protein YggS/PROSC family. As to quaternary structure, monomer.

In terms of biological role, pyridoxal 5'-phosphate (PLP)-binding protein, which is involved in PLP homeostasis. This chain is Pyridoxal phosphate homeostasis protein, found in Buchnera aphidicola subsp. Acyrthosiphon pisum (strain APS) (Acyrthosiphon pisum symbiotic bacterium).